A 530-amino-acid polypeptide reads, in one-letter code: MLGTDRCVVEEWLSEFKALPDTQITSYAATLHRKKTLVPALYKVIQDSNNELLEPVCHQLFELYRSSEVRLKRFTLQFLPELMWVYLRLTVSRDRQSNGCIEALLLGIYNLEIADKDGNNKVLSFTIPSLSKPSIYHEPSTIGSMALTEGALCQHDLIRVVYSDLHPQRETFTAQNRFEVLSFLMLCYNSAIVYMPASSYQSLCRMGSRVCVSGFPRQHEKHWKELCGRIVLDPEFMVQLLTGVYYAMYNGQWDLGQEVLDDIIYRAQLELFSQPLLVANAMKNSLPFDAPDSTQEGQKVLKVEVTPTVPRISRTAITTASIRRHRWRREGAEGVNGGEESVNLNDADEGFSSGASLSSQPIGTKPSSSSQRGSLRKVATGRSAKDKETASAIKSSESPRDSVVRKQYVQQPTDLSVDSVELTPMKKHLSLPAGQVVPKTNSLSLIRTASASSSKSFDYVNGSQASTSIGVGTEGGTNLAANNANRYSTVSLQEDRLGQAGEGKELLSPGAPLTKQSRSPSFNMQLISQV.

A phosphothreonine mark is found at Thr-30 and Thr-306. 2 positions are modified to phosphoserine: Ser-321 and Ser-341. Residues 328–410 (RREGAEGVNG…DSVVRKQYVQ (83 aa)) form a disordered region. Over residues 353-373 (SGASLSSQPIGTKPSSSSQRG) the composition is skewed to polar residues. A phosphoserine mark is found at Ser-430, Ser-442, Ser-444, and Ser-491. Residues 498-530 (GQAGEGKELLSPGAPLTKQSRSPSFNMQLISQV) are disordered. Positions 514 to 530 (TKQSRSPSFNMQLISQV) are enriched in polar residues.

It belongs to the Hyccin family. In terms of assembly, component of a phosphatidylinositol 4-kinase (PI4K) complex, composed of PI4KA, EFR3 (EFR3A or EFR3B), TTC7 (TTC7A or TTC7B) and HYCC (HYCC1 or HYCC2).

The protein resides in the cytoplasm. The protein localises to the cytosol. Its subcellular location is the cell membrane. Component of a complex required to localize phosphatidylinositol 4-kinase (PI4K) to the plasma membrane. In Pongo abelii (Sumatran orangutan), this protein is Hyccin 2 (HYCC2).